We begin with the raw amino-acid sequence, 196 residues long: Small ribosomal subunit protein uS4c (196 aa).

Residues 15 to 42 (LGALPGLTRKTPKSGSNQKKKFNSGKKE) form a disordered region. Positions 89 to 150 (MRLDNILFRL…NQRSKRLVQN (62 aa)) constitute an S4 RNA-binding domain.

This sequence belongs to the universal ribosomal protein uS4 family. As to quaternary structure, part of the 30S ribosomal subunit. Contacts protein S5. The interaction surface between S4 and S5 is involved in control of translational fidelity.

The protein resides in the plastid. It localises to the chloroplast. In terms of biological role, one of the primary rRNA binding proteins, it binds directly to 16S rRNA where it nucleates assembly of the body of the 30S subunit. With S5 and S12 plays an important role in translational accuracy. The chain is Small ribosomal subunit protein uS4c (rps4) from Cenchrus longisetus (Feathertop).